Consider the following 276-residue polypeptide: Aquaporin-1 (276 aa).

Residues 1–10 (MLDAEQKKNY) are Cytoplasmic-facing. A helical transmembrane segment spans residues 11-31 (VAGAFGEFVGTAYFLFMGVGG). The Extracellular segment spans residues 32–46 (AVNFLNNAAGSPLPG). The helical transmembrane segment at 47–67 (FAIPFCFGFSLFVNVFIWAPI) threads the bilayer. Topologically, residues 68–93 (SGGVFNPSITIALMATNPKDFPWYRG) are cytoplasmic. Positions 73–75 (NPS) match the NPA 1 motif. A helical transmembrane segment spans residues 94 to 114 (ILYIVSQFLGALFGSWLIDLI). Residues 115-133 (QPEAPNAATLLADGVSVAQ) lie on the Extracellular side of the membrane. A helical membrane pass occupies residues 134–154 (GLFMEMFATSVLTMAVLILAG). Residues 155–159 (ERYGK) lie on the Cytoplasmic side of the membrane. The chain crosses the membrane as a helical span at residues 160–180 (YLAPFGIGMSLFISALCAGPY). Residues 181–204 (TGASLNPARTLGPAIVANQYGRAH) lie on the Extracellular side of the membrane. The short motif at 186–188 (NPA) is the NPA 2 element. Residues 205-225 (WIYYVGPTLGSLLAAGYWHIL) form a helical membrane-spanning segment. The Cytoplasmic segment spans residues 226 to 276 (RILNIDVVDLKNVLNKCKKCGKEDPRISLKHCEECLKDDPKPEKYDIESQN).

The protein belongs to the MIP/aquaporin (TC 1.A.8) family.

It localises to the cell membrane. It carries out the reaction H2O(in) = H2O(out). With respect to regulation, polyethylene glycol (PEG) stimulates whereas glycerol inhibits the aquaporin activity. Functionally, water channel required to facilitate the transport of water across membranes. Stimulates plant drought tolerance by facilitating the transport of water from the arbuscular mycorrhiza fungus to host plants. The sequence is that of Aquaporin-1 from Rhizophagus irregularis (Arbuscular mycorrhizal fungus).